The following is a 429-amino-acid chain: RNA-binding protein BRN2 (429 aa).

RRM domains lie at valine 12–glycine 93, histidine 100–threonine 180, and alanine 330–aspartate 408. Residues glycine 410–serine 429 form a disordered region. Residues serine 418–serine 429 show a composition bias toward polar residues.

As to expression, expressed in roots, stems, flowers and siliques.

The protein localises to the cytoplasm. Functionally, RNA-binding protein involved in the regulation of flowering time. Acts as a repressor of the activity of SOC1, a transcriptional activator of flowering time. Binds to the 3'-UTR of SOC1 mRNA in the cytoplasm and participates in SOC1 mRNA decay, mediated by the distal region of the SOC1 3'-UTR. The protein is RNA-binding protein BRN2 of Arabidopsis thaliana (Mouse-ear cress).